We begin with the raw amino-acid sequence, 418 residues long: Voltage-gated ClC-type chloride channel ClcB (418 aa).

A topological domain (cytoplasmic) is located at residue Met1. Residues Phe2–Phe22 traverse the membrane as a helical segment. Topologically, residues Arg23–Arg53 are periplasmic. A helical transmembrane segment spans residues Leu54 to Phe74. The Cytoplasmic segment spans residues Thr75 to Lys145. A helical transmembrane segment spans residues Leu146–Gly166. Residues Ser167–Thr177 are Periplasmic-facing. Residues Met178–Ile200 form a helical membrane-spanning segment. Topologically, residues Asn201–Tyr221 are cytoplasmic. A helical membrane pass occupies residues Ala222–Met242. Residues Asn243–Pro257 are Periplasmic-facing. A helical membrane pass occupies residues Trp258 to Trp278. Residues Gly279–Thr290 are Cytoplasmic-facing. Residues Ala291–Ala311 form a helical membrane-spanning segment. The Periplasmic portion of the chain corresponds to Ser312–Ser315. A helical transmembrane segment spans residues Gly316–Tyr336. The Cytoplasmic segment spans residues Gly337–Thr351. A helical membrane pass occupies residues Leu352–Met372. The Periplasmic segment spans residues Ser373 to Glu379. Residues Met380–Ile400 traverse the membrane as a helical segment. The Cytoplasmic segment spans residues Ser401–Ser418.

This sequence belongs to the chloride channel (TC 2.A.49) family. ClcB subfamily.

The protein resides in the cell inner membrane. In terms of biological role, probably acts as an electrical shunt for an outwardly-directed proton pump that is linked to amino acid decarboxylation, as part of the extreme acid resistance (XAR) response. This is Voltage-gated ClC-type chloride channel ClcB (clcB) from Escherichia coli (strain K12).